The following is a 128-amino-acid chain: Glycine cleavage system H protein (128 aa).

Positions Val24–Lys106 constitute a Lipoyl-binding domain. Lys65 carries the post-translational modification N6-lipoyllysine.

This sequence belongs to the GcvH family. In terms of assembly, the glycine cleavage system is composed of four proteins: P, T, L and H. (R)-lipoate is required as a cofactor.

The glycine cleavage system catalyzes the degradation of glycine. The H protein shuttles the methylamine group of glycine from the P protein to the T protein. In Yersinia enterocolitica serotype O:8 / biotype 1B (strain NCTC 13174 / 8081), this protein is Glycine cleavage system H protein.